A 247-amino-acid chain; its full sequence is 1-(5-phosphoribosyl)-5-[(5-phosphoribosylamino)methylideneamino] imidazole-4-carboxamide isomerase (247 aa).

Aspartate 8 serves as the catalytic Proton acceptor. The Proton donor role is filled by aspartate 130.

It belongs to the HisA/HisF family.

It localises to the cytoplasm. It carries out the reaction 1-(5-phospho-beta-D-ribosyl)-5-[(5-phospho-beta-D-ribosylamino)methylideneamino]imidazole-4-carboxamide = 5-[(5-phospho-1-deoxy-D-ribulos-1-ylimino)methylamino]-1-(5-phospho-beta-D-ribosyl)imidazole-4-carboxamide. The protein operates within amino-acid biosynthesis; L-histidine biosynthesis; L-histidine from 5-phospho-alpha-D-ribose 1-diphosphate: step 4/9. The protein is 1-(5-phosphoribosyl)-5-[(5-phosphoribosylamino)methylideneamino] imidazole-4-carboxamide isomerase of Stutzerimonas stutzeri (strain A1501) (Pseudomonas stutzeri).